The primary structure comprises 157 residues: Ribosomal RNA large subunit methyltransferase H (157 aa).

S-adenosyl-L-methionine contacts are provided by residues leucine 73, glycine 105, and 124–129; that span reads MSKMTF.

This sequence belongs to the RNA methyltransferase RlmH family. Homodimer.

The protein localises to the cytoplasm. The catalysed reaction is pseudouridine(1915) in 23S rRNA + S-adenosyl-L-methionine = N(3)-methylpseudouridine(1915) in 23S rRNA + S-adenosyl-L-homocysteine + H(+). Specifically methylates the pseudouridine at position 1915 (m3Psi1915) in 23S rRNA. The sequence is that of Ribosomal RNA large subunit methyltransferase H from Bacteroides thetaiotaomicron (strain ATCC 29148 / DSM 2079 / JCM 5827 / CCUG 10774 / NCTC 10582 / VPI-5482 / E50).